A 241-amino-acid chain; its full sequence is Uridylate kinase (241 aa).

Position 12–15 (12–15 (KLSG)) interacts with ATP. The tract at residues 20-25 (GDKGVG) is involved in allosteric activation by GTP. Glycine 54 is a UMP binding site. Glycine 55 and arginine 59 together coordinate ATP. Residues aspartate 74 and 135-142 (IGSPYFST) each bind UMP. ATP is bound by residues asparagine 163, tyrosine 169, and aspartate 172.

The protein belongs to the UMP kinase family. In terms of assembly, homohexamer.

The protein localises to the cytoplasm. The enzyme catalyses UMP + ATP = UDP + ADP. The protein operates within pyrimidine metabolism; CTP biosynthesis via de novo pathway; UDP from UMP (UMPK route): step 1/1. Allosterically activated by GTP. Inhibited by UTP. Catalyzes the reversible phosphorylation of UMP to UDP. This Streptococcus gordonii (strain Challis / ATCC 35105 / BCRC 15272 / CH1 / DL1 / V288) protein is Uridylate kinase.